We begin with the raw amino-acid sequence, 233 residues long: 5'-methylthioadenosine/S-adenosylhomocysteine nucleosidase (233 aa).

Catalysis depends on glutamate 12, which acts as the Proton acceptor. Substrate-binding positions include glycine 78, isoleucine 152, and 173–174 (ME). Aspartate 197 (proton donor) is an active-site residue.

It belongs to the PNP/UDP phosphorylase family. MtnN subfamily. In terms of assembly, homodimer.

It catalyses the reaction S-adenosyl-L-homocysteine + H2O = S-(5-deoxy-D-ribos-5-yl)-L-homocysteine + adenine. The catalysed reaction is S-methyl-5'-thioadenosine + H2O = 5-(methylsulfanyl)-D-ribose + adenine. It carries out the reaction 5'-deoxyadenosine + H2O = 5-deoxy-D-ribose + adenine. Its pathway is amino-acid biosynthesis; L-methionine biosynthesis via salvage pathway; S-methyl-5-thio-alpha-D-ribose 1-phosphate from S-methyl-5'-thioadenosine (hydrolase route): step 1/2. Its function is as follows. Catalyzes the irreversible cleavage of the glycosidic bond in both 5'-methylthioadenosine (MTA) and S-adenosylhomocysteine (SAH/AdoHcy) to adenine and the corresponding thioribose, 5'-methylthioribose and S-ribosylhomocysteine, respectively. Also cleaves 5'-deoxyadenosine, a toxic by-product of radical S-adenosylmethionine (SAM) enzymes, into 5-deoxyribose and adenine. Thus, is required for in vivo function of the radical SAM enzymes biotin synthase and lipoic acid synthase, that are inhibited by 5'-deoxyadenosine accumulation. The polypeptide is 5'-methylthioadenosine/S-adenosylhomocysteine nucleosidase (Yersinia pseudotuberculosis serotype O:1b (strain IP 31758)).